The primary structure comprises 335 residues: S-adenosylmethionine:tRNA ribosyltransferase-isomerase (335 aa).

Belongs to the QueA family. As to quaternary structure, monomer.

The protein resides in the cytoplasm. It catalyses the reaction 7-aminomethyl-7-carbaguanosine(34) in tRNA + S-adenosyl-L-methionine = epoxyqueuosine(34) in tRNA + adenine + L-methionine + 2 H(+). Its pathway is tRNA modification; tRNA-queuosine biosynthesis. In terms of biological role, transfers and isomerizes the ribose moiety from AdoMet to the 7-aminomethyl group of 7-deazaguanine (preQ1-tRNA) to give epoxyqueuosine (oQ-tRNA). In Thermotoga petrophila (strain ATCC BAA-488 / DSM 13995 / JCM 10881 / RKU-1), this protein is S-adenosylmethionine:tRNA ribosyltransferase-isomerase.